We begin with the raw amino-acid sequence, 717 residues long: Cleavage stimulation factor subunit 3 (717 aa).

N-acetylserine is present on Ser-2. HAT repeat units lie at residues 45–77 (QPID…AEIK), 79–110 (KNYD…YVRE), 117–152 (SYKE…FLKG), 163–196 (QRIT…YEEG), 221–261 (KEYE…WEKS), 271–303 (LITK…YLEQ), 319–352 (LFSD…YEES), 354–387 (MKYE…FARR), and 458–494 (NEDN…FESN). Residues 683-704 (AVKRPNEDSDEDEEKGAVVPPV) are disordered. Phosphoserine is present on Ser-691.

In terms of assembly, homodimer. The CSTF complex is composed of CSTF1 (50 kDa subunit), CSTF2 (64 kDa subunit) and CSTF3 (77 kDa subunit). CSTF3 directly interacts with CSTF1 and CSTF2. Interacts with FIP1L1.

It localises to the nucleus. In terms of biological role, one of the multiple factors required for polyadenylation and 3'-end cleavage of mammalian pre-mRNAs. The polypeptide is Cleavage stimulation factor subunit 3 (Cstf3) (Mus musculus (Mouse)).